The sequence spans 101 residues: Phosphoprotein OPG062 (101 aa).

The tract at residues proline 51–glycine 73 is disordered. A phosphoserine mark is found at serine 53 and serine 62. Positions cysteine 56–arginine 68 are enriched in basic and acidic residues.

The protein belongs to the orthopoxvirus OPG062 family. In terms of assembly, self-associates to form high molecular-weight forms. Interacts with protein OPG157. Interacts with host RICTOR and RPTOR; these interactions disrupt the mTORC1 and mTORC2 crosstalk. Post-translationally, phosphorylated on two serines. While these phosphorylations do not play a role in virion assembly; they are essential for the interaction with host RICTOR and RPTOR.

Its subcellular location is the virion. In terms of biological role, plays an essential role in virion assembly and morphogenesis. Also plays a role in the inhibition of host immune response by dysregulating mTOR. Sequesters host RICTOR and RPTOR, thereby disrupting mTORC1 and mTORC2 crosstalk. In turn, blocks the host antiviral response in part through mTOR-dependent degradation of cGAS, the primary poxvirus sensor. This chain is Phosphoprotein OPG062 (OPG062), found in Homo sapiens (Human).